The chain runs to 229 residues: Flagellar L-ring protein (229 aa).

Positions 1 to 23 (MLSRLGARALVCLAGVAMLAASG) are cleaved as a signal peptide. Residue Cys24 is the site of N-palmitoyl cysteine attachment. Cys24 is lipidated: S-diacylglycerol cysteine.

It belongs to the FlgH family. The basal body constitutes a major portion of the flagellar organelle and consists of four rings (L,P,S, and M) mounted on a central rod.

It is found in the cell outer membrane. It localises to the bacterial flagellum basal body. Assembles around the rod to form the L-ring and probably protects the motor/basal body from shearing forces during rotation. This is Flagellar L-ring protein from Cupriavidus taiwanensis (strain DSM 17343 / BCRC 17206 / CCUG 44338 / CIP 107171 / LMG 19424 / R1) (Ralstonia taiwanensis (strain LMG 19424)).